A 325-amino-acid chain; its full sequence is GMP reductase (325 aa).

Cysteine 173 acts as the Thioimidate intermediate in catalysis. Isoleucine 202–valine 225 contacts NADP(+).

Belongs to the IMPDH/GMPR family. GuaC type 2 subfamily.

It carries out the reaction IMP + NH4(+) + NADP(+) = GMP + NADPH + 2 H(+). Its function is as follows. Catalyzes the irreversible NADPH-dependent deamination of GMP to IMP. It functions in the conversion of nucleobase, nucleoside and nucleotide derivatives of G to A nucleotides, and in maintaining the intracellular balance of A and G nucleotides. This Variovorax paradoxus (strain S110) protein is GMP reductase.